Here is a 313-residue protein sequence, read N- to C-terminus: E3 ubiquitin-protein ligase SINA-like 2 (313 aa).

Residues 1–26 (MSGEASTSRRKRQRVPSSVESVENGG) form a disordered region. The RING-type zinc-finger motif lies at 44 to 80 (CPICCHALTSPIFQCDNGHIACSSCCTKLRNKCPSCA). The interval 94 to 277 (VVEAVMVTCP…LKMEICIRKL (184 aa)) is SBD. The segment at 97-155 (AVMVTCPNVKHGCTEKFSYGKELIHEKDCRFALCYCPAPNCNYSGVYKDLYSHFYVNHY) adopts an SIAH-type zinc-finger fold. Zn(2+) contacts are provided by C102, C109, H121, C125, C132, C137, H149, and H154. The tract at residues 278–313 (KKDEEEADEDEESEEEEDDDDDDDDDDEEEDADEEE) is disordered. The span at 282–313 (EEADEDEESEEEEDDDDDDDDDDEEEDADEEE) shows a compositional bias: acidic residues.

Belongs to the SINA (Seven in absentia) family.

It carries out the reaction S-ubiquitinyl-[E2 ubiquitin-conjugating enzyme]-L-cysteine + [acceptor protein]-L-lysine = [E2 ubiquitin-conjugating enzyme]-L-cysteine + N(6)-ubiquitinyl-[acceptor protein]-L-lysine.. It functions in the pathway protein modification; protein ubiquitination. In terms of biological role, E3 ubiquitin-protein ligase that mediates ubiquitination and subsequent proteasomal degradation of target proteins. E3 ubiquitin ligases accept ubiquitin from an E2 ubiquitin-conjugating enzyme in the form of a thioester and then directly transfers the ubiquitin to targeted substrates. It probably triggers the ubiquitin-mediated degradation of different substrates. The chain is E3 ubiquitin-protein ligase SINA-like 2 from Arabidopsis thaliana (Mouse-ear cress).